The chain runs to 230 residues: MPLPDTMFCAQQIHIPPELPDILKQFTKAAIRTQPADVLQWSAGYFSALSRGDPLPVKDRMEMPTATQKTDTGLTPGLLKVLHKQCHHKQYVELTDLEQKWKNLCLPKEKFKALLQLDPCENRIKWINFLALGCSMLGGSLNTALKHLCEILTDDPEGGPARIPFKTFSYVYRYLANLDSDVSSSETESYLASLKENIDTRRNGMIGLSDFFFPKRNLLENRENSEDVGH.

An RIIa domain is found at 17–54 (PELPDILKQFTKAAIRTQPADVLQWSAGYFSALSRGDP).

The protein belongs to the ropporin family. Component of the axonemal radial spoke complex 1 (RS1), at least composed of spoke head proteins RSPH1, RSPH3, RSPH9 and the cilia-specific component RSPH4A or sperm-specific component RSPH6A, spoke stalk proteins RSPH14, DNAJB13, DYDC1, ROPN1L and NME5, and the anchor protein IQUB. May interact with AKAP3. Interacts with FSCB; the interaction increases upon spermatozoa capacitation conditions. Interacts with CFAP61. Sumoylated, sumoylation decreases upon spermatozoa capacitation conditions.

The protein resides in the cell projection. It localises to the cilium. Its subcellular location is the flagellum. Functions as part of axonemal radial spoke complexes that play an important part in the motility of sperm and cilia. Important for male fertility. With ROPN1, involved in fibrous sheath integrity and sperm motility, plays a role in PKA-dependent signaling processes required for spermatozoa capacitation. In Macaca fascicularis (Crab-eating macaque), this protein is Ropporin-1-like protein (ROPN1L).